A 130-amino-acid polypeptide reads, in one-letter code: Small ribosomal subunit protein uS9 (130 aa).

The protein belongs to the universal ribosomal protein uS9 family.

This Cupriavidus necator (strain ATCC 17699 / DSM 428 / KCTC 22496 / NCIMB 10442 / H16 / Stanier 337) (Ralstonia eutropha) protein is Small ribosomal subunit protein uS9.